A 276-amino-acid chain; its full sequence is NH(3)-dependent NAD(+) synthetase (276 aa).

43–50 (GISGGVDS) contacts ATP. Asp49 serves as a coordination point for Mg(2+). Residue Arg146 coordinates deamido-NAD(+). ATP is bound at residue Thr166. Glu171 is a binding site for Mg(2+). Deamido-NAD(+) is bound by residues Lys179 and Asp186. Residues Lys195 and Thr217 each contribute to the ATP site. Deamido-NAD(+) is bound at residue 266–267 (HK).

The protein belongs to the NAD synthetase family. In terms of assembly, homodimer.

The enzyme catalyses deamido-NAD(+) + NH4(+) + ATP = AMP + diphosphate + NAD(+) + H(+). It participates in cofactor biosynthesis; NAD(+) biosynthesis; NAD(+) from deamido-NAD(+) (ammonia route): step 1/1. Its function is as follows. Catalyzes the ATP-dependent amidation of deamido-NAD to form NAD. Uses ammonia as a nitrogen source. The polypeptide is NH(3)-dependent NAD(+) synthetase (Aliivibrio fischeri (strain ATCC 700601 / ES114) (Vibrio fischeri)).